The sequence spans 217 residues: External core antigen (217 aa).

The signal sequence occupies residues 1-20; that stretch reads MYLFHLCLVFACVPCPTVQA. The interval 26–28 is HBEAG; that stretch reads GWL. The tract at residues 166 to 217 is disordered; sequence APILSTLPEHTVIRRRGGSRAARSPRRRTPSPRRRRSQSPRRRRSQSPASNC. Positions 178–210 are enriched in basic residues; it reads IRRRGGSRAARSPRRRTPSPRRRRSQSPRRRRS. A 1; half-length repeat occupies 189-195; the sequence is SPRRRTP. The tract at residues 189-211 is 3 X 8 AA repeats of S-P-R-R-R-R-S-Q; that stretch reads SPRRRTPSPRRRRSQSPRRRRSQ. The propeptide occupies 189 to 217; it reads SPRRRTPSPRRRRSQSPRRRRSQSPASNC. 2 tandem repeats follow at residues 196–203 and 204–211.

The protein belongs to the orthohepadnavirus precore antigen family. As to quaternary structure, homodimerizes. In terms of processing, phosphorylated. Post-translationally, cleaved by host furin.

It localises to the secreted. Its subcellular location is the host nucleus. Functionally, may regulate immune response to the intracellular capsid in acting as a T-cell tolerogen, by having an immunoregulatory effect which prevents destruction of infected cells by cytotoxic T-cells. This immune regulation may predispose to chronicity during perinatal infections and prevent severe liver injury during adult infections. This Otospermophilus beecheyi (California ground squirrel) protein is External core antigen.